Consider the following 146-residue polypeptide: Hemoglobin subunit beta (146 aa).

One can recognise a Globin domain in the interval 2–146 (QWTAEEKQLI…VAHALARKYH (145 aa)). 2 residues coordinate heme b: histidine 63 and histidine 92.

Belongs to the globin family. Heterotetramer of two alpha chains and two beta chains. In terms of tissue distribution, red blood cells.

Involved in oxygen transport from the lung to the various peripheral tissues. The polypeptide is Hemoglobin subunit beta (HBB) (Apus apus (Common swift)).